Reading from the N-terminus, the 213-residue chain is Phosphoribosyl-dephospho-CoA transferase (213 aa).

Residues D135 and D137 contribute to the active site.

The protein belongs to the MdcG family.

It carries out the reaction apo-[malonate decarboxylase ACP] + 2'-(5''-triphospho-alpha-D-ribosyl)-3'-dephospho-CoA = holo-[malonate decarboxylase ACP] + diphosphate. Functionally, transfers 2'-(5-triphosphoribosyl)-3'-dephosphocoenzyme-A to the apo-[acyl-carrier-protein] of the malonate decarboxylase to yield holo-[acyl-carrier-protein]. In Xanthomonas campestris pv. campestris (strain ATCC 33913 / DSM 3586 / NCPPB 528 / LMG 568 / P 25), this protein is Phosphoribosyl-dephospho-CoA transferase.